The following is a 170-amino-acid chain: Co-chaperone protein HscB homolog (170 aa).

A J domain is found at 5 to 79 (DHFSLFGLPA…RARYLCEQAG (75 aa)).

Belongs to the HscB family. As to quaternary structure, interacts with HscA and stimulates its ATPase activity.

Co-chaperone involved in the maturation of iron-sulfur cluster-containing proteins. Seems to help targeting proteins to be folded toward HscA. The sequence is that of Co-chaperone protein HscB homolog from Bordetella petrii (strain ATCC BAA-461 / DSM 12804 / CCUG 43448).